The sequence spans 156 residues: Small ribosomal subunit protein uS7 (156 aa).

It belongs to the universal ribosomal protein uS7 family. As to quaternary structure, part of the 30S ribosomal subunit. Contacts proteins S9 and S11.

Its function is as follows. One of the primary rRNA binding proteins, it binds directly to 16S rRNA where it nucleates assembly of the head domain of the 30S subunit. Is located at the subunit interface close to the decoding center, probably blocks exit of the E-site tRNA. In Staphylococcus saprophyticus subsp. saprophyticus (strain ATCC 15305 / DSM 20229 / NCIMB 8711 / NCTC 7292 / S-41), this protein is Small ribosomal subunit protein uS7.